The sequence spans 365 residues: UDP-N-acetylglucosamine--N-acetylmuramyl-(pentapeptide) pyrophosphoryl-undecaprenol N-acetylglucosamine transferase (365 aa).

UDP-N-acetyl-alpha-D-glucosamine is bound by residues 17 to 19, asparagine 129, arginine 167, serine 194, isoleucine 250, 269 to 274, and glutamine 295; these read TGG and ALTVSE.

Belongs to the glycosyltransferase 28 family. MurG subfamily.

Its subcellular location is the cell inner membrane. The catalysed reaction is di-trans,octa-cis-undecaprenyl diphospho-N-acetyl-alpha-D-muramoyl-L-alanyl-D-glutamyl-meso-2,6-diaminopimeloyl-D-alanyl-D-alanine + UDP-N-acetyl-alpha-D-glucosamine = di-trans,octa-cis-undecaprenyl diphospho-[N-acetyl-alpha-D-glucosaminyl-(1-&gt;4)]-N-acetyl-alpha-D-muramoyl-L-alanyl-D-glutamyl-meso-2,6-diaminopimeloyl-D-alanyl-D-alanine + UDP + H(+). Its pathway is cell wall biogenesis; peptidoglycan biosynthesis. Its function is as follows. Cell wall formation. Catalyzes the transfer of a GlcNAc subunit on undecaprenyl-pyrophosphoryl-MurNAc-pentapeptide (lipid intermediate I) to form undecaprenyl-pyrophosphoryl-MurNAc-(pentapeptide)GlcNAc (lipid intermediate II). In Shewanella piezotolerans (strain WP3 / JCM 13877), this protein is UDP-N-acetylglucosamine--N-acetylmuramyl-(pentapeptide) pyrophosphoryl-undecaprenol N-acetylglucosamine transferase.